A 242-amino-acid polypeptide reads, in one-letter code: Probable transcriptional regulatory protein PG_0097 (242 aa).

This sequence belongs to the TACO1 family.

It is found in the cytoplasm. The sequence is that of Probable transcriptional regulatory protein PG_0097 from Porphyromonas gingivalis (strain ATCC BAA-308 / W83).